Consider the following 324-residue polypeptide: UDP-N-acetylenolpyruvoylglucosamine reductase (324 aa).

The FAD-binding PCMH-type domain maps to 36–203; that stretch reads FRAGGLAELM…THAIFEGFPE (168 aa). Arginine 183 is an active-site residue. Serine 232 acts as the Proton donor in catalysis. Glutamate 302 is an active-site residue.

This sequence belongs to the MurB family. FAD serves as cofactor.

It localises to the cytoplasm. It carries out the reaction UDP-N-acetyl-alpha-D-muramate + NADP(+) = UDP-N-acetyl-3-O-(1-carboxyvinyl)-alpha-D-glucosamine + NADPH + H(+). It functions in the pathway cell wall biogenesis; peptidoglycan biosynthesis. Its function is as follows. Cell wall formation. This Sinorhizobium fredii (strain NBRC 101917 / NGR234) protein is UDP-N-acetylenolpyruvoylglucosamine reductase.